Reading from the N-terminus, the 377-residue chain is Chaperone protein DnaJ (377 aa).

The 65-residue stretch at 5-69 (DYYEVLGISK…QKRAQYDQYG (65 aa)) folds into the J domain. The CR-type zinc-finger motif lies at 134–216 (GKDAEIEIPR…CHGKGRVTKT (83 aa)). Zn(2+) is bound by residues C147, C150, C164, C167, C190, C193, C204, and C207. CXXCXGXG motif repeat units lie at residues 147-154 (CDTCHGSG), 164-171 (CSHCGGKG), 190-197 (CQYCNGTG), and 204-211 (CPTCHGKG).

The protein belongs to the DnaJ family. Homodimer. It depends on Zn(2+) as a cofactor.

The protein resides in the cytoplasm. Functionally, participates actively in the response to hyperosmotic and heat shock by preventing the aggregation of stress-denatured proteins and by disaggregating proteins, also in an autonomous, DnaK-independent fashion. Unfolded proteins bind initially to DnaJ; upon interaction with the DnaJ-bound protein, DnaK hydrolyzes its bound ATP, resulting in the formation of a stable complex. GrpE releases ADP from DnaK; ATP binding to DnaK triggers the release of the substrate protein, thus completing the reaction cycle. Several rounds of ATP-dependent interactions between DnaJ, DnaK and GrpE are required for fully efficient folding. Also involved, together with DnaK and GrpE, in the DNA replication of plasmids through activation of initiation proteins. This Listeria monocytogenes serotype 1/2a (strain 10403S) protein is Chaperone protein DnaJ.